The primary structure comprises 103 residues: Spherulin-3A (103 aa).

The tract at residues 1 to 13 is N-terminal arm; that stretch reads MSVCKGVSGNPAK. 2 Beta/gamma crystallin 'Greek key' domains span residues 14-55 and 57-99; these read GEVF…KVGP and TKAF…IVAT.

This sequence belongs to the beta/gamma-crystallin family.

The protein resides in the cytoplasm. Structural protein. This is Spherulin-3A from Physarum polycephalum (Slime mold).